Here is a 238-residue protein sequence, read N- to C-terminus: CBS domain-containing protein CBSX2, chloroplastic (238 aa).

A chloroplast-targeting transit peptide spans 1–71; sequence MGSISLSNSM…ASVNNNNSVP (71 aa). 2 consecutive CBS domains span residues 83–145 and 177–234; these read MTPR…QNDT and MTPS…KRET.

It localises to the plastid. The protein resides in the chloroplast stroma. The sequence is that of CBS domain-containing protein CBSX2, chloroplastic (CBSX2) from Arabidopsis thaliana (Mouse-ear cress).